Reading from the N-terminus, the 354-residue chain is Probable L-ascorbate-6-phosphate lactonase UlaG (354 aa).

Belongs to the UlaG family. A divalent metal cation is required as a cofactor.

The protein localises to the cytoplasm. The catalysed reaction is L-ascorbate 6-phosphate + H2O = 3-dehydro-L-gulonate 6-phosphate. It functions in the pathway cofactor degradation; L-ascorbate degradation; D-xylulose 5-phosphate from L-ascorbate: step 1/4. Functionally, probably catalyzes the hydrolysis of L-ascorbate-6-P into 3-keto-L-gulonate-6-P. Is essential for L-ascorbate utilization under anaerobic conditions. The protein is Probable L-ascorbate-6-phosphate lactonase UlaG of Escherichia coli O45:K1 (strain S88 / ExPEC).